A 395-amino-acid polypeptide reads, in one-letter code: Acetate kinase (395 aa).

N7 contacts Mg(2+). K14 contributes to the ATP binding site. R90 lines the substrate pocket. D147 functions as the Proton donor/acceptor in the catalytic mechanism. Residues 207-211 (HLGNG), 282-284 (DFR), and 330-334 (GLGEN) contribute to the ATP site. Mg(2+) is bound at residue E383.

Belongs to the acetokinase family. In terms of assembly, homodimer. Requires Mg(2+) as cofactor. Mn(2+) is required as a cofactor.

It is found in the cytoplasm. The enzyme catalyses acetate + ATP = acetyl phosphate + ADP. Its pathway is metabolic intermediate biosynthesis; acetyl-CoA biosynthesis; acetyl-CoA from acetate: step 1/2. In terms of biological role, catalyzes the formation of acetyl phosphate from acetate and ATP. Can also catalyze the reverse reaction. The protein is Acetate kinase of Lachnoclostridium phytofermentans (strain ATCC 700394 / DSM 18823 / ISDg) (Clostridium phytofermentans).